Here is a 1694-residue protein sequence, read N- to C-terminus: Clathrin heavy chain (1694 aa).

Residues 1–478 form a globular terminal domain region; the sequence is MTNLPIRFQE…HDRKLALSIY (478 aa). WD40-like repeat regions lie at residues 23–67, 68–107, 108–149, 150–195, 196–256, 257–300, and 301–329; these read SIGF…KQMK, TDAA…MQEP, LEFW…PDLQ, NTEI…QSIE, GHAA…EIGA, SDFP…ISNE, and NIFV…VSID. Positions 448 to 464 are binding site for the uncoating ATPase, involved in lattice disassembly; it reads EKWLTEDKLECSEQLGD. A flexible linker region spans residues 479-522; it reads YRANASDKVITLFAETGEFDKIIAYCKKFNYKPDFMFLLQRMAN. Residues 523–1694 are heavy chain arm; it reads ANPMGAADFA…QQNYNQYGGF (1172 aa). CHCR repeat units follow at residues 537 to 681, 687 to 829, 834 to 973, 980 to 1125, 1129 to 1270, 1275 to 1421, and 1424 to 1567; these read KEEG…QNLQ, AVSY…QEDY, IMSV…SLID, LPES…VKEC, FIKA…FRLA, INII…LLIN, and LSVL…NSAF. The interval 1214 to 1523 is involved in binding clathrin light chain; it reads AAKVLYTNIS…YLYKKNNRWA (310 aa). The trimerization stretch occupies residues 1551–1694; it reads GEELLQYFVD…QQNYNQYGGF (144 aa). Residues 1610 to 1640 adopt a coiled-coil conformation; the sequence is KVDQLVDDFKARQKKTEEEKEQQNIESSQYQ.

It belongs to the clathrin heavy chain family. As to quaternary structure, clathrin coats are formed from molecules containing 3 heavy chains and 3 light chains.

The protein localises to the cytoplasmic vesicle membrane. It is found in the membrane. Its subcellular location is the coated pit. Its function is as follows. Clathrin is the major protein of the polyhedral coat of coated pits and vesicles. The protein is Clathrin heavy chain (chcA) of Dictyostelium discoideum (Social amoeba).